A 583-amino-acid chain; its full sequence is Arginine--tRNA ligase (583 aa).

The 'HIGH' region signature appears at 131–141 (ANPTGPMHVGH).

It belongs to the class-I aminoacyl-tRNA synthetase family. As to quaternary structure, monomer.

Its subcellular location is the cytoplasm. The catalysed reaction is tRNA(Arg) + L-arginine + ATP = L-arginyl-tRNA(Arg) + AMP + diphosphate. The chain is Arginine--tRNA ligase from Parvibaculum lavamentivorans (strain DS-1 / DSM 13023 / NCIMB 13966).